The chain runs to 360 residues: Nucleoporin SEH1 (360 aa).

WD repeat units follow at residues 10–49 (DHKDLIHDVSFDFHGRRMATCSSDQSVKVWDKSESGEWHC), 55–96 (THSG…SNDK), 111–152 (DSRT…NLSQ), 160–210 (SCKL…RKYA), 217–258 (TVTD…KELT), and 276–315 (NHNSQVWRVSWNITGTVLASSGDDGCVRLWKANYMDNWKC). A Glycyl lysine isopeptide (Lys-Gly) (interchain with G-Cter in SUMO2) cross-link involves residue K12. At S190 the chain carries Phosphoserine. The segment covering 324 to 342 (SPVNGSSQQGNSNPSVGSN) has biased composition (low complexity). The interval 324–360 (SPVNGSSQQGNSNPSVGSNIPSLQNSLNGSSAGRKHS) is disordered. Residues 343–354 (IPSLQNSLNGSS) are compositionally biased toward polar residues.

It belongs to the WD repeat SEC13 family. In terms of assembly, component of the Nup107-160 subcomplex of the nuclear pore complex (NPC). The Nup107-160 subcomplex includes NUP160, NUP133, NUP107, NUP98, NUP85, NUP43, NUP37, SEH1 and SEC13. The SEH1 subunit appears to be only weakly associated with the Nup107-160 subcomplex. Component of the GATOR2 subcomplex, composed of MIOS, SEC13, SEH1L, WDR24 and WDR59. The GATOR2 complex interacts with CASTOR1 and CASTOR2; the interaction is negatively regulated by arginine. The GATOR2 complex interacts with SESN1, SESN2 and SESN3; the interaction is negatively regulated by amino acids. SESN1, SESN2 and SESN3 convey leucine availability via direct interaction with SEH1L and WDR24.

Its subcellular location is the chromosome. The protein localises to the centromere. It localises to the kinetochore. The protein resides in the nucleus. It is found in the nuclear pore complex. Its subcellular location is the lysosome membrane. Its activity is regulated as follows. The GATOR2 complex is negatively regulated by the upstream amino acid sensors CASTOR1 and SESN2, which sequester the GATOR2 complex in absence of amino acids. In the presence of abundant amino acids, GATOR2 is released from CASTOR1 and SESN2 and activated. In terms of biological role, component of the Nup107-160 subcomplex of the nuclear pore complex (NPC). The Nup107-160 subcomplex is required for the assembly of a functional NPC. The Nup107-160 subcomplex is also required for normal kinetochore microtubule attachment, mitotic progression and chromosome segregation. This subunit plays a role in recruitment of the Nup107-160 subcomplex to the kinetochore. As a component of the GATOR2 complex, functions as an activator of the amino acid-sensing branch of the mTORC1 signaling pathway. The GATOR2 complex indirectly activates mTORC1 through the inhibition of the GATOR1 subcomplex. GATOR2 probably acts as an E3 ubiquitin-protein ligase toward GATOR1. In the presence of abundant amino acids, the GATOR2 complex mediates ubiquitination of the NPRL2 core component of the GATOR1 complex, leading to GATOR1 inactivation. In the absence of amino acids, GATOR2 is inhibited, activating the GATOR1 complex. Within the GATOR2 complex, SEC13 and SEH1L are required to stabilize the complex. The protein is Nucleoporin SEH1 (SEH1L) of Bos taurus (Bovine).